The sequence spans 484 residues: Probable cytochrome P450 508A1 (484 aa).

Residues 1–21 form a helical membrane-spanning segment; that stretch reads MALFEIIISLFVVYIIHNAIS. Cys428 is a heme binding site.

It belongs to the cytochrome P450 family. Heme serves as cofactor.

It is found in the membrane. The sequence is that of Probable cytochrome P450 508A1 (cyp508A1-1) from Dictyostelium discoideum (Social amoeba).